The following is a 512-amino-acid chain: Vacuolar protein sorting-associated protein 30 (512 aa).

Residues 294–511 (TNIYNESFRI…LVFCSSKLSL (218 aa)) are BARA.

This sequence belongs to the beclin family. Component of the autophagy-specific VPS34 PI3-kinase complex I composed of VPS15, VPS30, VPS34, ATG14 and ATG38; and of the VPS34 PI3-kinase complex II composed of VPS15, VPS30, VPS34 and VPS38.

The protein resides in the endosome membrane. It localises to the vacuole membrane. It is found in the preautophagosomal structure membrane. Its function is as follows. Required for cytoplasm to vacuole transport (Cvt), autophagy, nucleophagy, and mitophagy, as a part of the autophagy-specific VPS34 PI3-kinase complex I. This complex is essential to recruit the ATG8-phosphatidylinositol conjugate and the ATG12-ATG5 conjugate to the pre-autophagosomal structure. Also involved in endosome-to-Golgi retrograde transport as part of the VPS34 PI3-kinase complex II. This second complex is required for the endosome-to-Golgi retrieval of PEP1 and KEX2, and the recruitment of VPS5 and VPS7, two components of the retromer complex, to endosomal membranes (probably through the synthesis of a specific pool of phosphatidylinositol 3-phosphate recruiting the retromer to the endosomes). Required for survival and/or proliferation in kidneys but not brain. The sequence is that of Vacuolar protein sorting-associated protein 30 from Candida glabrata (strain ATCC 2001 / BCRC 20586 / JCM 3761 / NBRC 0622 / NRRL Y-65 / CBS 138) (Yeast).